The sequence spans 278 residues: Transmembrane protein 41A-B (278 aa).

The N-terminal stretch at 1–23 (MRSIWGLIVLVAAATFYLYLLSA) is a signal peptide. The next 5 membrane-spanning stretches (helical) occupy residues 78-98 (GYVF…AIPG), 101-121 (FLNM…IACT), 164-184 (LFFF…FLNV), 191-211 (IPIP…NFIC), and 230-250 (WFTL…GALI).

Belongs to the TMEM41 family.

The protein localises to the membrane. The sequence is that of Transmembrane protein 41A-B from Danio rerio (Zebrafish).